A 136-amino-acid chain; its full sequence is Immunoglobulin J chain (136 aa).

3 disulfide bridges follow: Cys12–Cys100, Cys71–Cys91, and Cys108–Cys133. A glycan (N-linked (GlcNAc...) (complex) asparagine) is linked at Asn48.

As to quaternary structure, part of the secretory IgA (sIgA) complex that consists of two, four or five IgA monomers, and two additional non-Ig polypeptides, namely the JCHAIN and the secretory component (the proteolytic product of PIGR). Part of the secretory IgM (sIgM) complex that consist of five IgM monomers, and two additional non-Ig polypeptides, namely the JCHAIN and the secretory component (the proteolytic product of PIGR). JCHAIN-containing IgM interacts (via CH4 domain) with FCRM (via Ig-like domain).

It localises to the secreted. In terms of biological role, serves to link two monomer units of either IgM or IgA. In the case of IgM, the J chain-joined dimer is a nucleating unit for the IgM pentamer, and in the case of IgA it induces dimers and/or larger polymers. It also helps to bind these immunoglobulins to secretory component. The polypeptide is Immunoglobulin J chain (Oryctolagus cuniculus (Rabbit)).